A 219-amino-acid polypeptide reads, in one-letter code: Small ribosomal subunit protein uS3c (219 aa).

The KH type-2 domain maps to 47-119 (VRKYVRTAEN…KFIISLAEVE (73 aa)).

The protein belongs to the universal ribosomal protein uS3 family. In terms of assembly, part of the 30S ribosomal subunit.

It is found in the plastid. The protein resides in the chloroplast. The protein is Small ribosomal subunit protein uS3c (rps3) of Staurastrum punctulatum (Green alga).